Here is a 265-residue protein sequence, read N- to C-terminus: U6 snRNA phosphodiesterase 1 (265 aa).

A disordered region spans residues Met-1–His-67. Positions Ala-20–Ser-32 are enriched in basic and acidic residues. The active-site Proton acceptor is the His-120. His-120–Ser-122 contacts AMP. Residues Gln-164, Tyr-202, and Ser-206–Ser-210 contribute to the UMP site. AMP contacts are provided by residues Tyr-202 and Asp-204 to Ser-210. His-208 acts as the Proton donor in catalysis.

It belongs to the 2H phosphoesterase superfamily. USB1 family. As to quaternary structure, interacts with PLRG1, CDC5L and PRPF19.

It is found in the nucleus. The catalysed reaction is a 3'-end uridylyl-uridine-RNA = a 3'-end 2',3'-cyclophospho-uridine-RNA + uridine. It carries out the reaction a 3'-end uridylyl-adenosine-RNA = a 3'-end 2',3'-cyclophospho-uridine-RNA + adenosine. Functionally, 3'-5' RNA exonuclease that trims the 3' end of oligo(U) and oligo(A) tracts of the pre-U6 small nuclear RNA (snRNA) molecule, leading to the formation of a mature U6 snRNA 3' end-terminated with a 2',3'-cyclic phosphate. Participates in the U6 snRNA 3' end processing that prevents U6 snRNA degradation. In addition also removes uridines from the 3' end of U6atac snRNA and possibly the vault RNA VTRNA1-1. This chain is U6 snRNA phosphodiesterase 1, found in Bos taurus (Bovine).